The sequence spans 73 residues: UPF0154 protein BcerKBAB4_3367 (73 aa).

A helical transmembrane segment spans residues Trp4–Ile24.

It belongs to the UPF0154 family.

The protein localises to the cell membrane. In Bacillus mycoides (strain KBAB4) (Bacillus weihenstephanensis), this protein is UPF0154 protein BcerKBAB4_3367.